Reading from the N-terminus, the 79-residue chain is Small ribosomal subunit protein bS18 (79 aa).

This sequence belongs to the bacterial ribosomal protein bS18 family. In terms of assembly, part of the 30S ribosomal subunit. Forms a tight heterodimer with protein bS6.

Functionally, binds as a heterodimer with protein bS6 to the central domain of the 16S rRNA, where it helps stabilize the platform of the 30S subunit. In Rhodopseudomonas palustris (strain BisB5), this protein is Small ribosomal subunit protein bS18.